The primary structure comprises 164 residues: Lipoprotein signal peptidase (164 aa).

The next 4 membrane-spanning stretches (helical) occupy residues 12-32 (WLWLVVIVLIIDLGSKYLILQ), 42-62 (LFPSLNLHASAYYGAAFSFLA), 70-90 (WFFAGIAIGISVLLAVMMYRS), and 102-122 (ALIIGGALGNLFDRLWHGFVV). Residues Asp123 and Asp141 contribute to the active site. A helical transmembrane segment spans residues 137 to 157 (FNLADTAICVGAALIVLEGFL).

This sequence belongs to the peptidase A8 family.

The protein resides in the cell inner membrane. The catalysed reaction is Release of signal peptides from bacterial membrane prolipoproteins. Hydrolyzes -Xaa-Yaa-Zaa-|-(S,diacylglyceryl)Cys-, in which Xaa is hydrophobic (preferably Leu), and Yaa (Ala or Ser) and Zaa (Gly or Ala) have small, neutral side chains.. The protein operates within protein modification; lipoprotein biosynthesis (signal peptide cleavage). Functionally, this protein specifically catalyzes the removal of signal peptides from prolipoproteins. The protein is Lipoprotein signal peptidase of Shigella flexneri serotype 5b (strain 8401).